The sequence spans 183 residues: Nucleoside triphosphate pyrophosphatase (183 aa).

The active-site Proton acceptor is Asp-71.

It belongs to the Maf family. A divalent metal cation is required as a cofactor.

The protein localises to the cytoplasm. The enzyme catalyses a ribonucleoside 5'-triphosphate + H2O = a ribonucleoside 5'-phosphate + diphosphate + H(+). The catalysed reaction is a 2'-deoxyribonucleoside 5'-triphosphate + H2O = a 2'-deoxyribonucleoside 5'-phosphate + diphosphate + H(+). Nucleoside triphosphate pyrophosphatase. May have a dual role in cell division arrest and in preventing the incorporation of modified nucleotides into cellular nucleic acids. This chain is Nucleoside triphosphate pyrophosphatase, found in Campylobacter jejuni subsp. jejuni serotype O:6 (strain 81116 / NCTC 11828).